The primary structure comprises 588 residues: Retrograde regulation protein 2 (588 aa).

The protein belongs to the GppA/Ppx family.

Required for a novel path of interorganelle communication between mitochondria, peroxisomes and the nucleus, thereby maintaining a functional metabolic interaction between the tricarboxylic acid and glyoxylate cycles. In particular, required for the retrograde expression of the peroxisomal isoform of citrate synthase, CIT2. This chain is Retrograde regulation protein 2 (RTG2), found in Saccharomyces cerevisiae (strain ATCC 204508 / S288c) (Baker's yeast).